Consider the following 2531-residue polypeptide: Mediator of RNA polymerase II transcription subunit 12 (2531 aa).

Disordered stretches follow at residues 1-41 (MLSM…VKHG), 204-283 (QNHD…GSVM), 584-604 (VSRR…PKQD), and 742-762 (TTAT…THGF). Positions 210 to 247 (SSNGTTSGSLTAAGNGPASNGSTGTSSINSVTGSSAST) are enriched in low complexity. Over residues 586–604 (RRREEDQVEPRPPYEPKQD) the composition is skewed to basic and acidic residues. A Phosphothreonine modification is found at threonine 745. Phosphoserine is present on residues serine 748 and serine 781. Over residues 748–757 (SPPPPAPPPT) the composition is skewed to pro residues. The span at 796–805 (EKGQQHEAPD) shows a compositional bias: basic and acidic residues. The tract at residues 796 to 824 (EKGQQHEAPDSPKIGPPGDGETNPGGSIS) is disordered. Serine 806 and serine 1356 each carry phosphoserine. Threonine 1360 is subject to Phosphothreonine. Polar residues-rich tracts occupy residues 1585–1595 (VSKSDCNSSGS) and 1901–1910 (TPSSVDQSPS). Disordered regions lie at residues 1585–1608 (VSKS…CHSS), 1898–2092 (KADT…NQYA), 2114–2218 (QALS…GMAP), and 2469–2508 (MGGG…QQQT). Residues 1919 to 1933 (GRGKGTTTRKRKPKN) show a composition bias toward basic residues. 2 stretches are compositionally biased toward low complexity: residues 1938–2038 (PVVN…QQLN) and 2045–2055 (QPNPQMNFMQQ). Positions 2056-2066 (GPGGGGAGPQG) are enriched in gly residues. Composition is skewed to low complexity over residues 2067–2080 (MPGQ…APQQ), 2121–2132 (RQRQPFQQQAQQ), and 2139–2205 (NPMQ…QQQQ). The segment covering 2469–2496 (MGGGAGGGMGAGPQQGGGAVGGGAGGGM) has biased composition (gly residues). A compositionally biased stretch (low complexity) spans 2497 to 2507 (VPQQQSMNQQQ).

The protein belongs to the Mediator complex subunit 12 family. Component of the Cdk8 module of the Mediator complex, composed of CycC, Cdk8, kto and skd.

It is found in the nucleus. Component of the Mediator complex, a coactivator involved in regulated gene transcription of nearly all RNA polymerase II-dependent genes. Mediator functions as a bridge to convey information from gene-specific regulatory proteins to the basal RNA polymerase II transcription machinery. Mediator is recruited to promoters by direct interactions with regulatory proteins and serves as a scaffold for the assembly of a functional preinitiation complex with RNA polymerase II and the general transcription factors. Required for leg and eye development and macrochaete specification or differentiation. The protein is Mediator of RNA polymerase II transcription subunit 12 (kto) of Drosophila melanogaster (Fruit fly).